A 945-amino-acid chain; its full sequence is Glutamyl aminopeptidase (945 aa).

Residues 1 to 18 (MNFAEEEPSKKYCIKGKH) are Cytoplasmic-facing. Residues 19–39 (VAIICATVVAVGLIVGLSVGL) form a helical; Signal-anchor for type II membrane protein membrane-spanning segment. Residues 40 to 945 (TRSCEPGTTP…SISEWFTSMP (906 aa)) are Extracellular-facing. The segment at 45-77 (PGTTPAPSNPPPHTSTALPPQDQNVCPDSDDES) is disordered. Residues asparagine 116 and asparagine 189 are each glycosylated (N-linked (GlcNAc...) asparagine). Residue glutamate 215 coordinates substrate. Residues asparagine 236 and asparagine 316 are each glycosylated (N-linked (GlcNAc...) asparagine). 349 to 353 (GAMEN) is a substrate binding site. Histidine 385 provides a ligand contact to Zn(2+). Glutamate 386 (proton acceptor) is an active-site residue. Residues histidine 389 and glutamate 408 each contribute to the Zn(2+) site. 8 N-linked (GlcNAc...) asparagine glycosylation sites follow: asparagine 546, asparagine 584, asparagine 601, asparagine 640, asparagine 669, asparagine 754, asparagine 766, and asparagine 792. Arginine 878 is a binding site for substrate.

It belongs to the peptidase M1 family. As to quaternary structure, homodimer; disulfide-linked. The cofactor is Zn(2+). In terms of tissue distribution, highest expression in kidney proximal tubules and ileum enterocytes. High expression also detected in liver and pituitary. Lower levels in heart, adrenal gland and brain. Not detected in aorta, lung or spleen. In heart, higher levels in ventricle than in atrium. Also expressed in glomerular mesangial cells.

It localises to the cell membrane. It catalyses the reaction Release of N-terminal glutamate (and to a lesser extent aspartate) from a peptide.. Substrate specificity is modulated by calcium which enhances the enzymatic activity for cleavage of acidic residues while reducing its activity with basic residues. Inhibited by aminopeptidase inhibitors amastatin and bestatin. Functionally, regulates central hypertension through its calcium-modulated preference to cleave N-terminal acidic residues from peptides such as angiotensin II. The sequence is that of Glutamyl aminopeptidase (Enpep) from Rattus norvegicus (Rat).